Reading from the N-terminus, the 278-residue chain is Large ribosomal subunit protein uL2 (278 aa).

Disordered stretches follow at residues 28–58 and 223–278; these read TPEKSLTRPLPKKGGRNNQGRITTRHQGGGH and GVVM…KNKR. Polar residues predominate over residues 43–53; it reads RNNQGRITTRH. Over residues 268-278 the composition is skewed to basic residues; the sequence is IRRRKTGKNKR.

It belongs to the universal ribosomal protein uL2 family. Part of the 50S ribosomal subunit. Forms a bridge to the 30S subunit in the 70S ribosome.

Its function is as follows. One of the primary rRNA binding proteins. Required for association of the 30S and 50S subunits to form the 70S ribosome, for tRNA binding and peptide bond formation. It has been suggested to have peptidyltransferase activity; this is somewhat controversial. Makes several contacts with the 16S rRNA in the 70S ribosome. The chain is Large ribosomal subunit protein uL2 from Nocardioides sp. (strain ATCC BAA-499 / JS614).